The chain runs to 736 residues: Phosphoribosylformylglycinamidine synthase subunit PurL (736 aa).

Residue His-49 is part of the active site. Positions 52 and 91 each coordinate ATP. Residue Glu-93 coordinates Mg(2+). Substrate contacts are provided by residues 94-97 and Arg-116; that span reads SHNH. His-95 functions as the Proton acceptor in the catalytic mechanism. Asp-117 serves as a coordination point for Mg(2+). Gln-240 contributes to the substrate binding site. Residue Asp-268 participates in Mg(2+) binding. 312-314 contacts substrate; sequence ESQ. Residues Asp-493 and Gly-530 each coordinate ATP. Asn-531 contributes to the Mg(2+) binding site. Ser-533 provides a ligand contact to substrate.

This sequence belongs to the FGAMS family. Monomer. Part of the FGAM synthase complex composed of 1 PurL, 1 PurQ and 2 PurS subunits.

The protein resides in the cytoplasm. It carries out the reaction N(2)-formyl-N(1)-(5-phospho-beta-D-ribosyl)glycinamide + L-glutamine + ATP + H2O = 2-formamido-N(1)-(5-O-phospho-beta-D-ribosyl)acetamidine + L-glutamate + ADP + phosphate + H(+). The protein operates within purine metabolism; IMP biosynthesis via de novo pathway; 5-amino-1-(5-phospho-D-ribosyl)imidazole from N(2)-formyl-N(1)-(5-phospho-D-ribosyl)glycinamide: step 1/2. In terms of biological role, part of the phosphoribosylformylglycinamidine synthase complex involved in the purines biosynthetic pathway. Catalyzes the ATP-dependent conversion of formylglycinamide ribonucleotide (FGAR) and glutamine to yield formylglycinamidine ribonucleotide (FGAM) and glutamate. The FGAM synthase complex is composed of three subunits. PurQ produces an ammonia molecule by converting glutamine to glutamate. PurL transfers the ammonia molecule to FGAR to form FGAM in an ATP-dependent manner. PurS interacts with PurQ and PurL and is thought to assist in the transfer of the ammonia molecule from PurQ to PurL. The chain is Phosphoribosylformylglycinamidine synthase subunit PurL from Rhodopseudomonas palustris (strain ATCC BAA-98 / CGA009).